Here is a 339-residue protein sequence, read N- to C-terminus: MTIQKNWQELIRPNKLQVTPGSDATRFATLVAEPLERGFGQTLGNALRRVLLSSLQGAAVQSVHIDGVLHEFSSIAGVREDVTDIVLNIKDISLKMQGEGPKRMVVKKQGPGAVTAGDIQTVGDIVVLNPDLQLCTLDDGAEIRMEFTVNTGKGYVAAERNRPEDAPIGLIPVDSLYSPVRKVSYKVENTREGQILDYDKLTMTVETNGAISPEDAVAFAARILQDQLNVFVNFEEPRKEVTQEIIPDLAFNPAFLKKVDELELSVRSANCLKNDNIVYIGDLVQKSEAEMLRTPNFGRKSLNEIKEVLAQMGLHLGMEVPGWPPENIDELAKRFEDHY.

Residues 1–235 form an alpha N-terminal domain (alpha-NTD) region; it reads MTIQKNWQEL…DQLNVFVNFE (235 aa). Residues 251–339 are alpha C-terminal domain (alpha-CTD); that stretch reads FNPAFLKKVD…ELAKRFEDHY (89 aa).

The protein belongs to the RNA polymerase alpha chain family. In terms of assembly, homodimer. The RNAP catalytic core consists of 2 alpha, 1 beta, 1 beta' and 1 omega subunit. When a sigma factor is associated with the core the holoenzyme is formed, which can initiate transcription.

The enzyme catalyses RNA(n) + a ribonucleoside 5'-triphosphate = RNA(n+1) + diphosphate. Functionally, DNA-dependent RNA polymerase catalyzes the transcription of DNA into RNA using the four ribonucleoside triphosphates as substrates. In Rhodopseudomonas palustris (strain ATCC BAA-98 / CGA009), this protein is DNA-directed RNA polymerase subunit alpha.